Here is a 148-residue protein sequence, read N- to C-terminus: Urease accessory protein UreE (148 aa).

The protein belongs to the UreE family.

It is found in the cytoplasm. Its function is as follows. Involved in urease metallocenter assembly. Binds nickel. Probably functions as a nickel donor during metallocenter assembly. The protein is Urease accessory protein UreE of Geobacillus kaustophilus (strain HTA426).